A 127-amino-acid chain; its full sequence is uncharacterized protein (127 aa).

Positions 1 to 13 (MEAGNRSGTPQHR) are enriched in polar residues. Residues 1–26 (MEAGNRSGTPQHRQLSEIRQDLSSSP) form a disordered region.

This is an uncharacterized protein from Saccharomyces cerevisiae (strain ATCC 204508 / S288c) (Baker's yeast).